Consider the following 365-residue polypeptide: uncharacterized protein (365 aa).

Composition is skewed to basic and acidic residues over residues 1 to 27 and 315 to 339; these read MDNV…EDHS and AKDD…ETPK. Disordered stretches follow at residues 1–31 and 308–365; these read MDNV…NSYQ and KEEK…CLIS. Over residues 340–353 the composition is skewed to polar residues; the sequence is KASNTPRRNKSNTQ.

This sequence to yeast YGL082w. In terms of assembly, interacts with sad1.

It localises to the cytoplasm. This is an uncharacterized protein from Schizosaccharomyces pombe (strain 972 / ATCC 24843) (Fission yeast).